The chain runs to 250 residues: Mediator of RNA polymerase II transcription subunit 6 (250 aa).

The segment at 166-250 is disordered; it reads KKREEEKKED…EPTARTTSKQ (85 aa). Residues 204–223 show a composition bias toward acidic residues; sequence PAEDALEREEKEEVEEEEEE. Residues 224-239 show a composition bias toward basic and acidic residues; that stretch reads TLKTEEPTTSTDEPKF.

This sequence belongs to the Mediator complex subunit 6 family. Component of the Mediator complex. Interacts with let-19/mdt-13. Interacts with RNA polymerase II. Interacts with mdt-28.

Its subcellular location is the nucleus. Its function is as follows. Component of the Mediator complex, a coactivator involved in the regulated transcription of nearly all RNA polymerase II-dependent genes. Mediator functions as a bridge to convey information from gene-specific regulatory proteins to the basal RNA polymerase II transcription machinery. Mediator is recruited to promoters by direct interactions with regulatory proteins and serves as a scaffold for the assembly of a functional preinitiation complex with RNA polymerase II and the general transcription factors. Acts to repress beta-catenin target genes. Required for asymmetric division of T-cells and for gonad and germ cell development. This chain is Mediator of RNA polymerase II transcription subunit 6 (mdt-6), found in Caenorhabditis elegans.